The chain runs to 137 residues: Nucleoside diphosphate kinase (137 aa).

6 residues coordinate ATP: lysine 9, phenylalanine 57, arginine 85, threonine 91, arginine 102, and asparagine 112. The Pros-phosphohistidine intermediate role is filled by histidine 115.

The protein belongs to the NDK family. As to quaternary structure, homotetramer. Mg(2+) is required as a cofactor.

The protein localises to the cytoplasm. It catalyses the reaction a 2'-deoxyribonucleoside 5'-diphosphate + ATP = a 2'-deoxyribonucleoside 5'-triphosphate + ADP. The catalysed reaction is a ribonucleoside 5'-diphosphate + ATP = a ribonucleoside 5'-triphosphate + ADP. Its function is as follows. Major role in the synthesis of nucleoside triphosphates other than ATP. The ATP gamma phosphate is transferred to the NDP beta phosphate via a ping-pong mechanism, using a phosphorylated active-site intermediate. The polypeptide is Nucleoside diphosphate kinase (Campylobacter jejuni subsp. jejuni serotype O:6 (strain 81116 / NCTC 11828)).